A 283-amino-acid chain; its full sequence is Polyamine aminopropyltransferase (283 aa).

Residues 3-236 (GIWFSELQTP…GLWAFSLGSK (234 aa)) enclose the PABS domain. Position 32 (Gln32) interacts with S-methyl-5'-thioadenosine. Positions 63 and 87 each coordinate spermidine. Residues Glu107 and 138–139 (DG) each bind S-methyl-5'-thioadenosine. Residue Asp156 is the Proton acceptor of the active site. 156–159 (DSTD) is a spermidine binding site. Residue Pro163 participates in S-methyl-5'-thioadenosine binding.

It belongs to the spermidine/spermine synthase family. In terms of assembly, homodimer or homotetramer.

It is found in the cytoplasm. The enzyme catalyses S-adenosyl 3-(methylsulfanyl)propylamine + putrescine = S-methyl-5'-thioadenosine + spermidine + H(+). It functions in the pathway amine and polyamine biosynthesis; spermidine biosynthesis; spermidine from putrescine: step 1/1. Catalyzes the irreversible transfer of a propylamine group from the amino donor S-adenosylmethioninamine (decarboxy-AdoMet) to putrescine (1,4-diaminobutane) to yield spermidine. The protein is Polyamine aminopropyltransferase of Moorella thermoacetica (strain ATCC 39073 / JCM 9320).